A 200-amino-acid chain; its full sequence is Dephospho-CoA kinase (200 aa).

Positions valine 3–serine 200 constitute a DPCK domain. Residue glycine 11 to serine 16 participates in ATP binding.

It belongs to the CoaE family.

The protein localises to the cytoplasm. The catalysed reaction is 3'-dephospho-CoA + ATP = ADP + CoA + H(+). It functions in the pathway cofactor biosynthesis; coenzyme A biosynthesis; CoA from (R)-pantothenate: step 5/5. Its function is as follows. Catalyzes the phosphorylation of the 3'-hydroxyl group of dephosphocoenzyme A to form coenzyme A. This is Dephospho-CoA kinase from Nitrosospira multiformis (strain ATCC 25196 / NCIMB 11849 / C 71).